The sequence spans 472 residues: Probable endopolygalacturonase D (472 aa).

An N-terminal signal peptide occupies residues 1 to 16 (MKRGALLVPFVPLALA). A glycan (N-linked (GlcNAc...) asparagine) is linked at N24. C129 and C144 are oxidised to a cystine. PbH1 repeat units follow at residues 236–258 (MYYS…DIEH), 259–297 (TENL…DIKS), and 298–319 (STNL…AVSS). N-linked (GlcNAc...) asparagine glycosylation occurs at N300. The active-site Proton donor is the D312. The cysteines at positions 314 and 330 are disulfide-linked. The active site involves H334. PbH1 repeat units follow at residues 349-370 (VDGV…RIKS), 378-400 (VSNI…DIQQ), 412-433 (TNGV…SDGK), and 444-467 (CSNF…YPTD). N-linked (GlcNAc...) asparagine glycans are attached at residues N361, N385, and N419. Cystine bridges form between C439-C444 and C462-C469.

This sequence belongs to the glycosyl hydrolase 28 family.

The protein resides in the secreted. It carries out the reaction (1,4-alpha-D-galacturonosyl)n+m + H2O = (1,4-alpha-D-galacturonosyl)n + (1,4-alpha-D-galacturonosyl)m.. Its function is as follows. Involved in maceration and soft-rotting of plant tissue. Hydrolyzes the 1,4-alpha glycosidic bonds of de-esterified pectate in the smooth region of the plant cell wall. The protein is Probable endopolygalacturonase D (pgaD) of Neosartorya fischeri (strain ATCC 1020 / DSM 3700 / CBS 544.65 / FGSC A1164 / JCM 1740 / NRRL 181 / WB 181) (Aspergillus fischerianus).